A 695-amino-acid chain; its full sequence is G-patch and R3H domain-containing protein C30B4.02c (695 aa).

Disordered stretches follow at residues 168–200 (SDKEISSTEESEQLCYKEQESEKELYSKDNDDS), 213–242 (DIANNNAAPPPPLAQAQEQLSTENEDEFDI), 257–317 (FADL…FDEG), 332–351 (GNTDSLAEDEDDILEEDEDE), 388–448 (DSED…VAAR), and 475–517 (DKSK…DSDN). Positions 182 to 198 (CYKEQESEKELYSKDND) are enriched in basic and acidic residues. 3 stretches are compositionally biased toward acidic residues: residues 262-286 (VLEEDDDDEDEDEELEGEKEEEEEE), 307-317 (EDSESLEFDEG), and 337-351 (LAEDEDDILEEDEDE). The span at 421 to 434 (KKDRKLPKKMRKAQ) shows a compositional bias: basic residues. The R3H domain maps to 525–587 (KIFINDVYQR…KRYTMLSKTH (63 aa)). Residues 652 to 695 (KENPGRRLLEKLGWYAGKGLGHPENEGSKDSLRAIVKVSRSGLG) enclose the G-patch domain.

It is found in the cytoplasm. The sequence is that of G-patch and R3H domain-containing protein C30B4.02c from Schizosaccharomyces pombe (strain 972 / ATCC 24843) (Fission yeast).